Reading from the N-terminus, the 670-residue chain is Rhophilin-1 (670 aa).

The segment at 1-20 is disordered; sequence MILEERPDGAGAGEESPRLQ. One can recognise an REM-1 domain in the interval 23 to 97; that stretch reads DSLTQIQCGQ…LEELSGGVDP (75 aa). Phosphoserine is present on S24. In terms of domain architecture, BRO1 spans 108–457; sequence PMIPLGLKET…LAKYAELDRE (350 aa). A PDZ domain is found at 513–592; sequence PVHLTRGEGG…ASLQVVSLLP (80 aa). A disordered region spans residues 616–670; it reads QREHGCKTPASTWASPRPLLNWSRKAQQGKTGGCPQPCAPVKPAPPSSLKHPGWP. Over residues 652-661 the composition is skewed to pro residues; the sequence is PCAPVKPAPP.

Belongs to the RHPN family. In terms of assembly, binds specifically to GTP-Rho. Interacts with ROPN1.

In terms of biological role, has no enzymatic activity. May serve as a target for Rho, and interact with some cytoskeletal component upon Rho binding or relay a Rho signal to other molecules. This is Rhophilin-1 from Homo sapiens (Human).